Consider the following 431-residue polypeptide: Enolase (431 aa).

Glutamine 166 lines the (2R)-2-phosphoglycerate pocket. The active-site Proton donor is glutamate 208. Aspartate 245, glutamate 288, and aspartate 315 together coordinate Mg(2+). Residues lysine 340, arginine 369, serine 370, and lysine 391 each contribute to the (2R)-2-phosphoglycerate site. Lysine 340 serves as the catalytic Proton acceptor.

This sequence belongs to the enolase family. The cofactor is Mg(2+).

It is found in the cytoplasm. The protein localises to the secreted. The protein resides in the cell surface. The enzyme catalyses (2R)-2-phosphoglycerate = phosphoenolpyruvate + H2O. It functions in the pathway carbohydrate degradation; glycolysis; pyruvate from D-glyceraldehyde 3-phosphate: step 4/5. In terms of biological role, catalyzes the reversible conversion of 2-phosphoglycerate (2-PG) into phosphoenolpyruvate (PEP). It is essential for the degradation of carbohydrates via glycolysis. The chain is Enolase from Clostridium botulinum (strain Loch Maree / Type A3).